Consider the following 479-residue polypeptide: Transcription factor CP2-like protein 1 (479 aa).

The Grh/CP2 DB domain occupies 43–280 (RLPPLQYVLC…PSPSYNGSPN (238 aa)). Disordered regions lie at residues 219–245 (KPKG…KEKY) and 271–301 (PSPS…LPVG). A compositionally biased stretch (basic and acidic residues) spans 221 to 245 (KGADRKQKTDREKMEKRTAQEKEKY). The interval 261 to 365 (PDVAYQVNSA…IRLFNAIKGR (105 aa)) is SAM2-like domain. Over residues 271 to 281 (PSPSYNGSPNS) the composition is skewed to polar residues.

This sequence belongs to the grh/CP2 family. CP2 subfamily. Forms homohexamers via its SAM-like domain. Interacts with MTA1; which is indispensable for TFCP2l1-mediated self-renewal-promoting effect and endoderm-inhibiting action. As to expression, highly expressed in placental JEG-3 cells and very low levels of expression in non-steroidogenic cells. No expression was seen in adrenal NCI-H295A cells or in adrenal tissue.

The protein localises to the nucleus. Its function is as follows. Transcription factor that facilitates establishment and maintenance of pluripotency in embryonic stem cells (ESCs). With KLF2, acts as the major effector of self-renewal that mediates induction of pluripotency downstream of LIF/STAT3 and Wnt/beta-catenin signaling. Required for normal duct development in the salivary gland and kidney. Coordinates the development of the kidney collecting ducts intercalated (IC) and principal (PC) cells, which regulate acid-base and salt-water homeostasis, respectively. Regulates the expression of IC genes including subunits B1 and D2 of the V-ATPase complex, OXGR1, CA12, SLC4A1, AQP6 and IC-specific transcription factor FOXI1. Also regulates the expression of JAG1 and subsequent notch signaling in the collecting duct. JAG1 initiates notch signaling in PCs but inhibits notch signaling in ICs. Acts as a transcriptional suppressor that may suppress UBP1-mediated transcriptional activation. Modulates the placental expression of CYP11A1. This chain is Transcription factor CP2-like protein 1 (TFCP2L1), found in Homo sapiens (Human).